A 344-amino-acid polypeptide reads, in one-letter code: Dihydroorotase (344 aa).

The Zn(2+) site is built by His-14 and His-16. Substrate is bound by residues 16–18 and Asn-42; that span reads HLR. 3 residues coordinate Zn(2+): Lys-100, His-137, and His-175. Lys-100 carries the N6-carboxylysine modification. His-137 serves as a coordination point for substrate. Leu-220 is a substrate binding site. Asp-248 lines the Zn(2+) pocket. Residue Asp-248 is part of the active site. Positions 252 and 264 each coordinate substrate.

It belongs to the metallo-dependent hydrolases superfamily. DHOase family. Class II DHOase subfamily. Homodimer. Requires Zn(2+) as cofactor.

The enzyme catalyses (S)-dihydroorotate + H2O = N-carbamoyl-L-aspartate + H(+). It participates in pyrimidine metabolism; UMP biosynthesis via de novo pathway; (S)-dihydroorotate from bicarbonate: step 3/3. Functionally, catalyzes the reversible cyclization of carbamoyl aspartate to dihydroorotate. The sequence is that of Dihydroorotase from Ralstonia pickettii (strain 12J).